A 421-amino-acid polypeptide reads, in one-letter code: Medium-chain specific acyl-CoA dehydrogenase, mitochondrial (421 aa).

Residues 1–25 (MIALFRRSCGVLRSLSHFDWRSQHT) constitute a mitochondrion transit peptide. Lys69 is subject to N6-acetyllysine; alternate. Lys69 is subject to N6-succinyllysine; alternate. Residue Lys79 is modified to N6-acetyllysine. 158–167 (YCVTEPVAGS) is a binding site for FAD. Octanoyl-CoA is bound at residue Ser167. An N6-succinyllysine modification is found at Lys179. 191–193 (WIT) provides a ligand contact to FAD. An N6-acetyllysine; alternate modification is found at Lys212. Lys212 is modified (N6-succinyllysine; alternate). Position 216 (Ser216) interacts with octanoyl-CoA. Lys217, Lys259, and Lys271 each carry N6-acetyllysine; alternate. Residues Lys217, Lys259, and Lys271 each carry the N6-succinyllysine; alternate modification. Asp278 serves as a coordination point for octanoyl-CoA. Lys279 carries the N6-acetyllysine modification. An octanoyl-CoA-binding site is contributed by Arg281. Residue Lys301 is modified to N6-acetyllysine. Residues 306 to 308 (RKT) and 316 to 317 (HQ) each bind FAD. Octanoyl-CoA contacts are provided by Arg349 and Thr351. Thr351 is subject to Phosphothreonine. 374–378 (QIFGG) is a binding site for FAD. Glu401 is an octanoyl-CoA binding site. Glu401 functions as the Proton acceptor in the catalytic mechanism. FAD is bound at residue 402–405 (GTAQ).

This sequence belongs to the acyl-CoA dehydrogenase family. In terms of assembly, homotetramer. Interacts with the heterodimeric electron transfer flavoprotein ETF. It depends on FAD as a cofactor. Acetylated. Could occur at proximity of the cofactor-binding sites and reduce the catalytic activity. Could be deacetylated by SIRT3.

The protein localises to the mitochondrion matrix. The catalysed reaction is a medium-chain 2,3-saturated fatty acyl-CoA + oxidized [electron-transfer flavoprotein] + H(+) = a medium-chain (2E)-enoyl-CoA + reduced [electron-transfer flavoprotein]. It carries out the reaction pentanoyl-CoA + oxidized [electron-transfer flavoprotein] + H(+) = (2E)-pentenoyl-CoA + reduced [electron-transfer flavoprotein]. It catalyses the reaction hexanoyl-CoA + oxidized [electron-transfer flavoprotein] + H(+) = (2E)-hexenoyl-CoA + reduced [electron-transfer flavoprotein]. The enzyme catalyses octanoyl-CoA + oxidized [electron-transfer flavoprotein] + H(+) = (2E)-octenoyl-CoA + reduced [electron-transfer flavoprotein]. The catalysed reaction is decanoyl-CoA + oxidized [electron-transfer flavoprotein] + H(+) = (2E)-decenoyl-CoA + reduced [electron-transfer flavoprotein]. It carries out the reaction dodecanoyl-CoA + oxidized [electron-transfer flavoprotein] + H(+) = (2E)-dodecenoyl-CoA + reduced [electron-transfer flavoprotein]. It catalyses the reaction tetradecanoyl-CoA + oxidized [electron-transfer flavoprotein] + H(+) = (2E)-tetradecenoyl-CoA + reduced [electron-transfer flavoprotein]. The enzyme catalyses oxidized [electron-transfer flavoprotein] + hexadecanoyl-CoA + H(+) = (2E)-hexadecenoyl-CoA + reduced [electron-transfer flavoprotein]. It functions in the pathway lipid metabolism; mitochondrial fatty acid beta-oxidation. In terms of biological role, medium-chain specific acyl-CoA dehydrogenase is one of the acyl-CoA dehydrogenases that catalyze the first step of mitochondrial fatty acid beta-oxidation, an aerobic process breaking down fatty acids into acetyl-CoA and allowing the production of energy from fats. The first step of fatty acid beta-oxidation consists in the removal of one hydrogen from C-2 and C-3 of the straight-chain fatty acyl-CoA thioester, resulting in the formation of trans-2-enoyl-CoA. Electron transfer flavoprotein (ETF) is the electron acceptor that transfers electrons to the main mitochondrial respiratory chain via ETF-ubiquinone oxidoreductase (ETF dehydrogenase). Among the different mitochondrial acyl-CoA dehydrogenases, medium-chain specific acyl-CoA dehydrogenase acts specifically on acyl-CoAs with saturated 6 to 12 carbons long primary chains. The sequence is that of Medium-chain specific acyl-CoA dehydrogenase, mitochondrial from Bos taurus (Bovine).